The chain runs to 99 residues: C-C motif chemokine 8 (99 aa).

The signal sequence occupies residues 1–23 (MKVSAGILCLLLVAATFGTQVLA). Residue Gln24 is modified to Pyrrolidone carboxylic acid. Cystine bridges form between Cys34–Cys59 and Cys35–Cys75.

This sequence belongs to the intercrine beta (chemokine CC) family. In terms of assembly, monomer or homodimer; in equilibrium.

It is found in the secreted. Chemotactic factor that attracts monocytes. This protein can bind heparin. The sequence is that of C-C motif chemokine 8 (CCL8) from Bos taurus (Bovine).